The chain runs to 466 residues: Cysteine--tRNA ligase (466 aa).

Zn(2+) is bound at residue Cys33. The 'HIGH' region motif lies at Pro35–Asn45. Residues Cys221, His246, and Glu250 each coordinate Zn(2+). A 'KMSKS' region motif is present at residues Lys279–Ser283. An ATP-binding site is contributed by Lys282.

Belongs to the class-I aminoacyl-tRNA synthetase family. In terms of assembly, monomer. The cofactor is Zn(2+).

It localises to the cytoplasm. The catalysed reaction is tRNA(Cys) + L-cysteine + ATP = L-cysteinyl-tRNA(Cys) + AMP + diphosphate. The chain is Cysteine--tRNA ligase from Rhizobium meliloti (strain 1021) (Ensifer meliloti).